The primary structure comprises 3195 residues: MWPPGLGTVVAAASRSQFDAMYEEMCYAMCVETSAAFLRACELAGPQAVQSQNVLDTILDQGAEITRTSVACETLPGGVKRYNMIDCQELPRLWRGSGQEPDMLLLHTTTFGNIPYDSTFDYEEKVLMLNGQQLGEKAAAMAREGAAAVLVIGNRGLGVAFTGGRHDPVFVFDPHGWMGGAAYMSRLPNPTSLTGFIADYVERRSGIVVTLTFLLWLYPDGWNIEQESPELRVEVISAALRAISQPPDFVFLDQFSETVVSPALPVPMGALRADRFAAKSIRAILARGTAPSPKKKPDSGEHGLPAGRPKPPKRHTPRSQNPALLDSTEKLSNLSPVKVKKPNKGKKMSVIAEPPSAAARTEQRGPGDSLGALAERPPWRLQGVRAAADVIAVPAASALAGLPEKPSDKLRGVLKYLPEAPTGGLSLGSGNALWAAILGTRVASLTDRLLVFLVENGITIRKAESEVGFLLDPVLAALAHRPDRGAVASLIGDTRLNLFALVARKAALLRLTELRDDRVSAVLVHKVQQVSSAIVSDTKTISAKLGALVDEISSEHPADAYGTLEKELLAFSLEKTAVVERPDETTAPILELVERAAEIVDAIEKETRAKAEREDRARRADEKLLAFAHSVWDEIDDIAGDVTRGVDVGSSQASAAASLAKRERIDIPEPSSMPPREDYSELKILDDKAKANAQKITDSAGKMLKVYANVIDYSISAFTSGTQSAIGRFALASPALDHMKAWLDRIAYADTLVDSLAGLTGRRESASPDWGRLSSLEPVRILEGLIETGADLSSDENLNHWTFQLFGAHAAGFMPSPSKWISAIHGINTRAHEVGLSATALAELETEIKAAEAMVADPGVRLECAKHALESAKAAVAGKSDPEQKARLAAAQARAAKLVDSCQRDLDEAKRLVDEATKRDAEIKKAAAALLRPVEKYQGLRGLGRSMAAAGLSDDAVAGIVAADTQVARVLRADAEAILANYERDFAELRGAQLLGTSAPLLRAVNFIDPRSGLGLLEPGSRIFLSEANDDLMDAVEDARTTRNTDSCSRAISALERIKWVIVEAEGAGQWPKFAVAAARALEGLRAKALIDDRAGLVRTTLAGMLKRAAIVSETVAKDTDDPEAAAERALKFVEMARRELRELELTDAEELSSQDYVALERALVELAEASRQKSIGLKKHAWRSRLRTLLERDRDDGEFSLDAWDQARDEGECYGGRDAVNDDLIKLARAVIDGRIQLGLRLVRAFFANNPYAAQASQALPGDARGPVELLESIRVAKWIFAFPGVADTYEYLFGISVVKLKALCEIGEEIVEAFDAAGSSDKNIDMHAFVQTVAGKLFQVSELTEFFDFYVRSYELFLDIRAALAETAGRVGALERTALEQLGAEERAAESIRDPEAAKERLERGDRDPDALTAMRELHGGLKLESKKQFEKTAYLEPLEYGYAEARRELERAIANVDAAKKLSQARVKDFLSSLLREREANDQELSRNLKTLKSVLAARSPKDVVAALNGAETLDAVVKIYADRLAEAEAENEAAIVGAETMEWLKFAAKTIDGSKMARETGGVGPTAAYAERLEKLCRARADADAKLKRLKDLYESFELALASAKEAGGKQKDESEDGWRRYEAAANNLLTSAEALGAQLRDEGNEQAGIKLLLLREPAAAAYEKGLENAAAVIKDVRTTLDDTSAGMRRLLTLYEAAKTEFAKPGLERLQKEISYAIAKYPVPKWFLALHAAVGKLVELRLGLYHAYEGLKISTIPYAPVAPESEYVMPDAALTAARVTAYMARSGKSVMTVTTHSLGIVGRAVVDEANQILEYKLCYATVSEKVAALWAAGSRLGAGQFGGLVLRDARDERGVEKFLGRGHAAVSLAATAAWLSGADTMITAELGSYVTFCATGHWPAMRDRKQLSMTVAACTTYCALAYATLTSTYGSAADTAVDSHGQFVPPEKFEAANTSGAVAAGAARGAKRKFALSIQDVLILLAACEPAHLTYFCRLDLLRQVEYMHKTLEAVLSRAVRDRVGVSCLEPPKADDTRKYMPVVMPAARGRFDKSYGACFAIDRHDWDSVKAPHYVGKMLEPWKTLPGTRENAERLERICGGTADAADGFTATLMMLAATAIPANLLEAMWALLGPRDEDLGENWQLGEGEVEGQWSGGAASAAAAAMLRFMLRRAAAVDNYTVATSGGTAGLALDSLSAKLLGPAGGSIMFLLKEDAVNLRRLLAFDVALLSILFGAKVVIAYETSALSRESGLLLCSSVFDARRGNRFADILCADHRACASDSAAAAADALKKIALADPNRIENACLLQQVEELASALHSKPLSYAQPFLFLANTSNQITQVLIPAKARPSEFFVTLRRDAAYEEVPLRRADRQAFPDEIDAKDIEGGDLFFSATVGGEVPVLDNPAHIAPAPPEYDRGEGNLFPFAGSRRSAPSEEEALSKAAGSKRNQIDAHGQNISQPARAGNTKIERASGKNRKTENNVTEHQTAARGRAAAPPTETKTTEKRQKCPPRESPLSRDERAPHDGLSAGAAEPRPPRGDSDDDRHKHETPHGVSDKAAEPPAVPSAEPRGPSTELIGGNWKSLPKTKPRRTSSGLRRKHQASASVHKHRTHGSSDDDSEDGEATYGFGSCRGRQRRSTLGGKKRSGTDRTAEFLKKATCVDKLEKFSRSGESPKAQNGTADVACDRLGERGNELSPPRAPASSPPPPGKQADHGIDQREIVPPNAQYGITTVVDPRQVRLPSSDDGDPAEEEDARDVEEGEEDVAGQWDSNYDVCLPTYDTDHAAQEEKDFDLASNNGTGGALPAADHAISAINDWVIADTDASAGVGTDWSEEDEDAPAADDGRSTNVEVATHGYTSDDSAADDESKRARATRDSSPPQHYPASPLAPSTPSSLPTPADTDNDTAILELDRNSGGDTDSNDDHAPPTDTGDAPPLCSEGELTPSTDEECAVVQDDARKKQENSSHERKDDGVRWEIDLDSDQGDYSDASDDCKIPDGPRVAPEKDIKNKQLEKSESDSCGGQGDPSTEPQQPLWEVYSPYDNSDSDDKAGNRKDPKLDGAALDMRSSRLRADAKSITSYVNDINEAVRDGGSAAAEFFARSEQSCIDSEDDARHLDKSRATLASDLDDHQSDQPRESLAPLDPETRSKMYTSLAVTCRLILRGMRHAQDAASAGVAELLTETNRIKMMLN.

In terms of domain architecture, Peptidase C76 spans 10-242 (VAAASRSQFD…VEVISAALRA (233 aa)). Active-site residues include Cys30, Asp173, and His175. Disordered stretches follow at residues 287 to 374 (RGTA…GALA), 2407 to 2776 (NPAH…DSNY), 2829 to 3068 (AGVG…AALD), and 3128 to 3147 (ASDL…APLD). Basic residues predominate over residues 338–347 (KVKKPNKGKK). Over residues 2470-2482 (KIERASGKNRKTE) the composition is skewed to basic and acidic residues. Low complexity predominate over residues 2491–2503 (AARGRAAAPPTET). Composition is skewed to basic and acidic residues over residues 2504 to 2527 (KTTE…RAPH) and 2538 to 2562 (RPPR…DKAA). Basic residues-rich tracts occupy residues 2588-2615 (PKTK…HRTH) and 2636-2648 (GRQR…GKKR). Composition is skewed to basic and acidic residues over residues 2649–2672 (SGTD…KFSR) and 2687–2696 (ACDRLGERGN). A compositionally biased stretch (pro residues) spans 2701–2712 (PRAPASSPPPPG). Positions 2714–2723 (QADHGIDQRE) are enriched in basic and acidic residues. Composition is skewed to acidic residues over residues 2748 to 2768 (DDGD…EEDV) and 2835 to 2844 (WSEEDEDAPA). The segment covering 2850–2864 (STNVEVATHGYTSDD) has biased composition (polar residues). Residues 2869-2878 (DESKRARATR) are compositionally biased toward basic and acidic residues. Residues 2887–2903 (PASPLAPSTPSSLPTPA) are compositionally biased toward low complexity. Positions 2959–2981 (DDARKKQENSSHERKDDGVRWEI) are enriched in basic and acidic residues. The segment covering 2982 to 2994 (DLDSDQGDYSDAS) has biased composition (acidic residues). 3 stretches are compositionally biased toward basic and acidic residues: residues 2995–3021 (DDCK…KSES), 3050–3062 (SDDK…DPKL), and 3131–3140 (LDDHQSDQPR).

This sequence belongs to the herpesviridae large tegument protein family. As to quaternary structure, interacts with host CUL1 and CUL4A; these interactions inhibit the E3 ligase activity of cullins. Interacts with inner tegument protein. Interacts with capsid vertex specific component CVC2. Interacts with the major capsid protein/MCP.

The protein localises to the virion tegument. Its subcellular location is the host cytoplasm. The protein resides in the host nucleus. It catalyses the reaction Thiol-dependent hydrolysis of ester, thioester, amide, peptide and isopeptide bonds formed by the C-terminal Gly of ubiquitin (a 76-residue protein attached to proteins as an intracellular targeting signal).. Its function is as follows. Large tegument protein that plays multiple roles in the viral cycle. During viral entry, remains associated with the capsid while most of the tegument is detached and participates in the capsid transport toward the host nucleus. Plays a role in the routing of the capsid at the nuclear pore complex and subsequent uncoating. Within the host nucleus, acts as a deneddylase and promotes the degradation of nuclear CRLs (cullin-RING ubiquitin ligases) and thereby stabilizes nuclear CRL substrates, while cytoplasmic CRLs remain unaffected. These modifications prevent host cell cycle S-phase progression and create a favorable environment allowing efficient viral genome replication. Participates later in the secondary envelopment of capsids. Indeed, plays a linker role for the association of the outer viral tegument to the capsids together with the inner tegument protein. This Amazona oratrix (yellow-headed parrot) protein is Large tegument protein deneddylase (UL36).